The primary structure comprises 62 residues: Photosystem II reaction center protein Z (62 aa).

The next 2 helical transmembrane spans lie at 8–28 and 41–61; these read ALAA…FAYA and WVGS…NFFV.

Belongs to the PsbZ family. In terms of assembly, PSII is composed of 1 copy each of membrane proteins PsbA, PsbB, PsbC, PsbD, PsbE, PsbF, PsbH, PsbI, PsbJ, PsbK, PsbL, PsbM, PsbT, PsbX, PsbY, PsbZ, Psb30/Ycf12, peripheral proteins PsbO, CyanoQ (PsbQ), PsbU, PsbV and a large number of cofactors. It forms dimeric complexes.

The protein localises to the cellular thylakoid membrane. In terms of biological role, may control the interaction of photosystem II (PSII) cores with the light-harvesting antenna, regulates electron flow through the 2 photosystem reaction centers. PSII is a light-driven water plastoquinone oxidoreductase, using light energy to abstract electrons from H(2)O, generating a proton gradient subsequently used for ATP formation. In Gloeothece citriformis (strain PCC 7424) (Cyanothece sp. (strain PCC 7424)), this protein is Photosystem II reaction center protein Z.